The primary structure comprises 126 residues: Glycine cleavage system H protein (126 aa).

The Lipoyl-binding domain occupies 22–104; sequence VAYVGITDYA…YGKGWLIKIS (83 aa). Residue Lys-63 is modified to N6-lipoyllysine.

The protein belongs to the GcvH family. As to quaternary structure, the glycine cleavage system is composed of four proteins: P, T, L and H. Requires (R)-lipoate as cofactor.

Functionally, the glycine cleavage system catalyzes the degradation of glycine. The H protein shuttles the methylamine group of glycine from the P protein to the T protein. The sequence is that of Glycine cleavage system H protein from Parabacteroides distasonis (strain ATCC 8503 / DSM 20701 / CIP 104284 / JCM 5825 / NCTC 11152).